The primary structure comprises 276 residues: Ribosomal RNA small subunit methyltransferase A (276 aa).

Residues Asn15, Leu17, Gly42, Glu63, Asp88, and Asn111 each contribute to the S-adenosyl-L-methionine site.

It belongs to the class I-like SAM-binding methyltransferase superfamily. rRNA adenine N(6)-methyltransferase family. RsmA subfamily.

Its subcellular location is the cytoplasm. It carries out the reaction adenosine(1518)/adenosine(1519) in 16S rRNA + 4 S-adenosyl-L-methionine = N(6)-dimethyladenosine(1518)/N(6)-dimethyladenosine(1519) in 16S rRNA + 4 S-adenosyl-L-homocysteine + 4 H(+). Functionally, specifically dimethylates two adjacent adenosines (A1518 and A1519) in the loop of a conserved hairpin near the 3'-end of 16S rRNA in the 30S particle. May play a critical role in biogenesis of 30S subunits. The chain is Ribosomal RNA small subunit methyltransferase A from Geobacter sulfurreducens (strain ATCC 51573 / DSM 12127 / PCA).